The chain runs to 451 residues: MPHRAPRRFMKTAPGACDWEQCLLMGSGEPTRARAVVSSSHKQRKPRQEISACLKWLVFLLNSIVFLVGVGILALGVYLFIKDFREVKLVDIILNPAILISIFGFSICVVSFFGFMGALRDNIFLLKCFAACVFLSYILVVAVTLVFFTLFYTDTTEGLSANWLLLYAVKNYHTNRNLAEIMDALQENLECCGVSSIAQGYRDWNMSYQFNCTNSNPQPEKCGVPFSCCRKSVISEAAGSSNPLLPAMRSLECWQNALTKRPGDLEHDIYTRGCLQPLRTLFESHAVHVGAFVALLIVPVCISVCLTNILAKQVDHQRYLLEREARRNDRRRKRDHNRRDQLNSLDLLEEGKFNNASANATRPRPPDIPPPLPPIEHVPRKKSRNASSSPTRKPKSAGVENAAARRKRTATTTRTPPAAAGPAPTPQATTTNRTHQWVLQQTDLVPQKSKS.

At 1 to 56 the chain is on the cytoplasmic side; sequence MPHRAPRRFMKTAPGACDWEQCLLMGSGEPTRARAVVSSSHKQRKPRQEISACLKW. A Basolateral membrane targeting motif is present at residues 20–24; that stretch reads EQCLL. A helical membrane pass occupies residues 57–77; the sequence is LVFLLNSIVFLVGVGILALGV. At 78 to 96 the chain is on the extracellular side; the sequence is YLFIKDFREVKLVDIILNP. Residues 97–117 form a helical membrane-spanning segment; the sequence is AILISIFGFSICVVSFFGFMG. Residues 118–130 are Cytoplasmic-facing; the sequence is ALRDNIFLLKCFA. Residues 131 to 151 traverse the membrane as a helical segment; sequence ACVFLSYILVVAVTLVFFTLF. Residues 152–285 are Extracellular-facing; the sequence is YTDTTEGLSA…QPLRTLFESH (134 aa). N-linked (GlcNAc...) asparagine glycans are attached at residues Asn-205 and Asn-211. Residues 286-306 form a helical membrane-spanning segment; it reads AVHVGAFVALLIVPVCISVCL. Topologically, residues 307 to 451 are cytoplasmic; sequence TNILAKQVDH…TDLVPQKSKS (145 aa). The tract at residues 328-451 is disordered; the sequence is NDRRRKRDHN…TDLVPQKSKS (124 aa). Residues 366-376 show a composition bias toward pro residues; the sequence is PDIPPPLPPIE. The segment covering 410–434 has biased composition (low complexity); sequence ATTTRTPPAAAGPAPTPQATTTNRT. Polar residues predominate over residues 435-444; the sequence is HQWVLQQTDL.

Belongs to the tetraspanin (TM4SF) family. As to expression, expressed in the germline, particularly in sperm cells. In terms of tissue distribution, expressed in the germline (particularly in sperm cells), anterior sensory cilia, hypodermis and vulva (at protein level). Expressed in the pharynx, hypodermis and vulva (at protein level).

It is found in the cell membrane. Its subcellular location is the cytoplasmic vesicle membrane. The protein localises to the endosome membrane. The protein resides in the early endosome membrane. It localises to the late endosome membrane. It is found in the recycling endosome membrane. Its subcellular location is the apical cell membrane. The protein localises to the basolateral cell membrane. Functions redundantly with tsp-12 to regulate cell surface levels of the BMP type II receptor daf-4 (but not BMP type I receptor sma-6), probably by regulating endosomal sorting and recycling of receptors, preventing their targeting to degradative lysosomes. Together with tsp-12, regulates cell fate specification in the postembryonic mesodermal M lineage, body size, male development and vulva development, probably by positively modulating BMP-like Sma/Mab signaling. Together with tsp-12 involved in maintaining the structural and functional integrity of the endosomal network. Together with tsp-12, probably acts by modulating the activation of glp-1, Notch-like receptor, to regulate germline maturation. Functionally, functions redundantly with tsp-12 to regulate cell fate specification in the postembryonic mesodermal M lineage, body size, embryonic and vulva development. In terms of biological role, functions redundantly with tsp-12 to regulate cell fate specification in the postembryonic mesodermal M lineage. Likely plays a complementary role in mesodermal development with tsp-14 isoform a, but may be more critical. This chain is Tetraspanin-14, found in Caenorhabditis elegans.